Reading from the N-terminus, the 1064-residue chain is Carbamoyl phosphate synthase large chain (1064 aa).

The segment at methionine 1 to glutamate 401 is carboxyphosphate synthetic domain. 12 residues coordinate ATP: arginine 129, arginine 169, glycine 175, glycine 176, lysine 208, isoleucine 210, glutamate 215, glycine 241, isoleucine 242, histidine 243, glutamine 284, and glutamate 298. The ATP-grasp 1 domain maps to lysine 133–isoleucine 327. Residues glutamine 284, glutamate 298, and asparagine 300 each contribute to the Mg(2+) site. Glutamine 284, glutamate 298, and asparagine 300 together coordinate Mn(2+). Residues isoleucine 402 to serine 546 form an oligomerization domain region. The carbamoyl phosphate synthetic domain stretch occupies residues leucine 547–glycine 929. The region spanning asparagine 671–leucine 861 is the ATP-grasp 2 domain. Positions 707, 746, 748, 752, 777, 778, 779, 780, 820, and 832 each coordinate ATP. The Mg(2+) site is built by glutamine 820, glutamate 832, and asparagine 834. Mn(2+) is bound by residues glutamine 820, glutamate 832, and asparagine 834. The MGS-like domain maps to phenylalanine 930 to serine 1064. Residues phenylalanine 930–serine 1064 form an allosteric domain region.

This sequence belongs to the CarB family. In terms of assembly, composed of two chains; the small (or glutamine) chain promotes the hydrolysis of glutamine to ammonia, which is used by the large (or ammonia) chain to synthesize carbamoyl phosphate. Tetramer of heterodimers (alpha,beta)4. It depends on Mg(2+) as a cofactor. Mn(2+) serves as cofactor.

The enzyme catalyses hydrogencarbonate + L-glutamine + 2 ATP + H2O = carbamoyl phosphate + L-glutamate + 2 ADP + phosphate + 2 H(+). It carries out the reaction hydrogencarbonate + NH4(+) + 2 ATP = carbamoyl phosphate + 2 ADP + phosphate + 2 H(+). It functions in the pathway amino-acid biosynthesis; L-arginine biosynthesis; carbamoyl phosphate from bicarbonate: step 1/1. Its pathway is pyrimidine metabolism; UMP biosynthesis via de novo pathway; (S)-dihydroorotate from bicarbonate: step 1/3. Large subunit of the glutamine-dependent carbamoyl phosphate synthetase (CPSase). CPSase catalyzes the formation of carbamoyl phosphate from the ammonia moiety of glutamine, carbonate, and phosphate donated by ATP, constituting the first step of 2 biosynthetic pathways, one leading to arginine and/or urea and the other to pyrimidine nucleotides. The large subunit (synthetase) binds the substrates ammonia (free or transferred from glutamine from the small subunit), hydrogencarbonate and ATP and carries out an ATP-coupled ligase reaction, activating hydrogencarbonate by forming carboxy phosphate which reacts with ammonia to form carbamoyl phosphate. This chain is Carbamoyl phosphate synthase large chain, found in Oenococcus oeni (strain ATCC BAA-331 / PSU-1).